The following is a 491-amino-acid chain: Cytochrome P450 2C40 (491 aa).

An N-terminal signal peptide occupies residues 1–25; that stretch reads MDPFVVLVLCLSFLLVLSLWRQRSA. Cysteine 435 contributes to the heme binding site.

This sequence belongs to the cytochrome P450 family. The cofactor is heme. Liver, brain, kidney, and intestine, with trace amounts in lung and heart. Expressed throughout the intestinal tract, with higher expression levels in jejunum, cecum and colon.

It localises to the endoplasmic reticulum membrane. It is found in the microsome membrane. The enzyme catalyses (5Z,8Z,11Z,14Z)-eicosatetraenoate + reduced [NADPH--hemoprotein reductase] + O2 = 16(R)-hydroxy-(5Z,8Z,11Z,14Z)-eicosatetraenoate + oxidized [NADPH--hemoprotein reductase] + H2O + H(+). It carries out the reaction (5Z,8Z,11Z,14Z)-eicosatetraenoate + reduced [NADPH--hemoprotein reductase] + O2 = 16(S)-hydroxy-(5Z,8Z,11Z,14Z)-eicosatetraenoate + oxidized [NADPH--hemoprotein reductase] + H2O + H(+). The catalysed reaction is (5Z,8Z,11Z,14Z)-eicosatetraenoate + reduced [NADPH--hemoprotein reductase] + O2 = (14R,15S)-epoxy-(5Z,8Z,11Z)-eicosatrienoate + oxidized [NADPH--hemoprotein reductase] + H2O + H(+). It catalyses the reaction (5Z,8Z,11Z,14Z)-eicosatetraenoate + reduced [NADPH--hemoprotein reductase] + O2 = (14S,15R)-epoxy-(5Z,8Z,11Z)-eicosatrienoate + oxidized [NADPH--hemoprotein reductase] + H2O + H(+). It participates in lipid metabolism; arachidonate metabolism. In terms of biological role, a cytochrome P450 monooxygenase that may play a major role in the metabolism of arachidonic acid in the intestinal tract. Exhibits regioselective hydroxylase and epoxidase activity toward arachidonic acid, producing 16(R)-hydroxyeicosatetraenoic acid (HETE) and (14R,15S)-epoxyeicosatrienoic acid (EpETrE) as major products. Mechanistically, uses molecular oxygen inserting one oxygen atom into a substrate, and reducing the second into a water molecule, with two electrons provided by NADPH via cytochrome P450 reductase (CPR; NADPH-ferrihemoprotein reductase). In Mus musculus (Mouse), this protein is Cytochrome P450 2C40.